Consider the following 141-residue polypeptide: Large ribosomal subunit protein uL14 (141 aa).

This sequence belongs to the universal ribosomal protein uL14 family. In terms of assembly, part of the 50S ribosomal subunit. Forms a cluster with proteins L3 and L24e, part of which may contact the 16S rRNA in 2 intersubunit bridges.

Binds to 23S rRNA. Forms part of two intersubunit bridges in the 70S ribosome. The protein is Large ribosomal subunit protein uL14 of Pyrococcus abyssi (strain GE5 / Orsay).